The chain runs to 80 residues: Exodeoxyribonuclease 7 small subunit (80 aa).

It belongs to the XseB family. Heterooligomer composed of large and small subunits.

It is found in the cytoplasm. The enzyme catalyses Exonucleolytic cleavage in either 5'- to 3'- or 3'- to 5'-direction to yield nucleoside 5'-phosphates.. Its function is as follows. Bidirectionally degrades single-stranded DNA into large acid-insoluble oligonucleotides, which are then degraded further into small acid-soluble oligonucleotides. This is Exodeoxyribonuclease 7 small subunit from Maridesulfovibrio salexigens (strain ATCC 14822 / DSM 2638 / NCIMB 8403 / VKM B-1763) (Desulfovibrio salexigens).